The primary structure comprises 72 residues: Altered inheritance of mitochondria protein 4 (72 aa).

Belongs to the AIM4 family.

The protein localises to the cytoplasm. This is Altered inheritance of mitochondria protein 4 (AIM4) from Zygosaccharomyces rouxii (strain ATCC 2623 / CBS 732 / NBRC 1130 / NCYC 568 / NRRL Y-229).